The primary structure comprises 264 residues: Tetraspanin-12 (264 aa).

Residues 1–13 lie on the Cytoplasmic side of the membrane; sequence MLRLSNAAVITTN. A helical transmembrane segment spans residues 14 to 34; the sequence is AILALIGLAALSFSVYVYVQG. Residues 35–45 lie on the Extracellular side of the membrane; the sequence is PSQCQRFVQNP. Residues 46–66 form a helical membrane-spanning segment; the sequence is LIVTAALLFFISSLGLIAALY. Residues 67 to 75 lie on the Cytoplasmic side of the membrane; it reads GSHIIITLY. A helical membrane pass occupies residues 76-96; sequence LFFLFLSILLLLVLSVFIFLV. Residues 97 to 228 are Extracellular-facing; sequence TNPTAGKALS…VLKGIRKRWR (132 aa). An N-linked (GlcNAc...) asparagine glycan is attached at asparagine 180. A helical transmembrane segment spans residues 229–249; the sequence is ILIVVNLLLILLVVFLYSCGC. Topologically, residues 250-264 are cytoplasmic; it reads CVRKNNRVPWKRRFF.

This sequence belongs to the tetraspanin (TM4SF) family.

Its subcellular location is the membrane. May be involved in the regulation of cell differentiation. In Arabidopsis thaliana (Mouse-ear cress), this protein is Tetraspanin-12 (TET12).